The sequence spans 251 residues: CDP-diacylglycerol pyrophosphatase (251 aa).

The chain crosses the membrane as a helical span at residues 5–25 (GYFLLAVIVIVAAAGVGYWKF).

Belongs to the Cdh family.

Its subcellular location is the cell inner membrane. It carries out the reaction a CDP-1,2-diacyl-sn-glycerol + H2O = a 1,2-diacyl-sn-glycero-3-phosphate + CMP + 2 H(+). The protein operates within phospholipid metabolism; CDP-diacylglycerol degradation; phosphatidate from CDP-diacylglycerol: step 1/1. This chain is CDP-diacylglycerol pyrophosphatase, found in Salmonella typhi.